A 279-amino-acid chain; its full sequence is Alcohol dehydrogenase-related 31 kDa protein (279 aa).

Residue 11-34 (YVADCGGIALETSKVLMTKNIAKL) participates in NAD(+) binding. A substrate-binding site is contributed by S139. Residue Y152 is the Proton acceptor of the active site.

It belongs to the short-chain dehydrogenases/reductases (SDR) family.

This chain is Alcohol dehydrogenase-related 31 kDa protein (Adhr), found in Drosophila subobscura (Fruit fly).